We begin with the raw amino-acid sequence, 287 residues long: MSAKIIDGKQVAQTIRNQVAAQVQQRLAQGKRAPGLAVILVGVDPASQVYVGSKRRACEEVGFISRSYDLDATASQEELLALIDKLNEDADVDGILVQLPLPAHCDTTQVLERIRPDKDVDGFHPYNVGRLAQRIPALRPCTPKGIMTLIEATGVKTHGLHAVVVGASNIVGRPMTLELLLAGCTTTTCHRFTQDLEDQVRRADLLVVAVGKPNFIPGEWIKPGALVIDVGINRLADGSLVGDVEFETARNHASFITPVPGGVGPMTVASLMENTLSACQDYHDNAQ.

Residues Gly-166–Ser-168 and Ile-232 each bind NADP(+).

Belongs to the tetrahydrofolate dehydrogenase/cyclohydrolase family. Homodimer.

The catalysed reaction is (6R)-5,10-methylene-5,6,7,8-tetrahydrofolate + NADP(+) = (6R)-5,10-methenyltetrahydrofolate + NADPH. It carries out the reaction (6R)-5,10-methenyltetrahydrofolate + H2O = (6R)-10-formyltetrahydrofolate + H(+). Its pathway is one-carbon metabolism; tetrahydrofolate interconversion. Its function is as follows. Catalyzes the oxidation of 5,10-methylenetetrahydrofolate to 5,10-methenyltetrahydrofolate and then the hydrolysis of 5,10-methenyltetrahydrofolate to 10-formyltetrahydrofolate. The protein is Bifunctional protein FolD of Aeromonas hydrophila subsp. hydrophila (strain ATCC 7966 / DSM 30187 / BCRC 13018 / CCUG 14551 / JCM 1027 / KCTC 2358 / NCIMB 9240 / NCTC 8049).